Consider the following 424-residue polypeptide: UPF0053 protein MG146 (424 aa).

Positions 6–191 constitute a CNNM transmembrane domain; the sequence is SGLTLTVIIL…EQNGLFSKED (186 aa). 4 consecutive transmembrane segments (helical) span residues 7–27, 71–91, 101–121, and 135–155; these read GLTL…STVV, LITI…ILFL, LLSS…FCEI, and LVLF…ITKL. 2 consecutive CBS domains span residues 210–270 and 272–332; these read MIKW…PKSL and LNQL…IYDE.

Belongs to the UPF0053 family.

It is found in the cell membrane. The protein is UPF0053 protein MG146 of Mycoplasma genitalium (strain ATCC 33530 / DSM 19775 / NCTC 10195 / G37) (Mycoplasmoides genitalium).